Reading from the N-terminus, the 358-residue chain is Replication-associated protein (358 aa).

The region spanning 7 to 115 (RIQAKNVFLT…DGDTVEWGQF (109 aa)) is the CRESS-DNA virus Rep endonuclease domain. An RCR-1 motif is present at residues 14-17 (FLTY). The a divalent metal cation site is built by E48, H56, and H58. The RCR-2 signature appears at 56 to 58 (HLH). Y102 functions as the For DNA cleavage activity in the catalytic mechanism. Positions 102 to 105 (YLDK) match the RCR-3 motif. D106 is a binding site for a divalent metal cation. The tract at residues 142 to 152 (KSEALNVIREL) is binding to RBR1. The interval 155-175 (KDFVLQFHNLNSNLDRIFQEP) is oligomerization. Residue 220-227 (GDSRTGKT) participates in ATP binding.

This sequence belongs to the geminiviridae Rep protein family. Homooligomer. Interacts with the replication enhancer protein (REn). Interacts with host retinoblastoma-related protein 1 (RBR1), and may thereby induce the transcription of host replicative enzymes even if the cell is not dividing anymore. Interacts with host PCNA. Interacts with host SCE1 protein. Mg(2+) is required as a cofactor. It depends on Mn(2+) as a cofactor.

Its subcellular location is the host nucleus. Essential for the replication of viral ssDNA. The closed circular ssDNA genome is first converted to a superhelical dsDNA. Rep binds a specific region at the genome origin of replication. It introduces an endonucleolytic nick within the conserved sequence 5'-TAATATTAC-3' in the intergenic region of the genome present in all geminiviruses, thereby initiating the rolling circle replication (RCR). Following cleavage, binds covalently to the 5'-phosphate of DNA as a tyrosyl ester. The cleavage gives rise to a free 3'-OH that serves as a primer for the cellular DNA polymerase. The polymerase synthesizes the (+) strand DNA by rolling circle mechanism. After one round of replication, a Rep-catalyzed nucleotidyl transfer reaction releases a circular single-stranded virus genome, thereby terminating the replication. Displays origin-specific DNA cleavage, nucleotidyl transferase, ATPase and helicase activities. The polypeptide is Replication-associated protein (Hewittia sublobata (Coralbush)).